The sequence spans 240 residues: Coatomer subunit delta (240 aa).

The span at 215-226 (AAAKASSAPKAK) shows a compositional bias: low complexity. Residues 215–240 (AAAKASSAPKAKGMQLGKKKNTSLLY) are disordered. Residues 231–240 (GKKKNTSLLY) are compositionally biased toward basic residues.

It belongs to the adaptor complexes medium subunit family. Delta-COP subfamily. As to quaternary structure, oligomeric complex that consists of at least the alpha, beta, beta', gamma, delta, epsilon and zeta subunits.

The protein localises to the cytoplasm. It localises to the nucleus. Its function is as follows. The coatomer is a cytosolic protein complex that binds to dilysine motifs and reversibly associates with Golgi non-clathrin-coated vesicles, which further mediate biosynthetic protein transport from the ER, via the Golgi up to the trans Golgi network. Coatomer complex is required for budding from Golgi membranes, and is essential for the retrograde Golgi-to-ER transport of dilysine-tagged proteins. The polypeptide is Coatomer subunit delta (ret2) (Schizosaccharomyces pombe (strain 972 / ATCC 24843) (Fission yeast)).